We begin with the raw amino-acid sequence, 54 residues long: Sec-independent protein translocase protein TatA (54 aa).

The chain crosses the membrane as a helical span at residues 1–21 (MGMSFSHLLIVLLIIFVLFGA).

It belongs to the TatA/E family. In terms of assembly, the Tat system comprises two distinct complexes: a TatABC complex, containing multiple copies of TatA, TatB and TatC subunits, and a separate TatA complex, containing only TatA subunits. Substrates initially bind to the TatABC complex, which probably triggers association of the separate TatA complex to form the active translocon.

It localises to the cell inner membrane. In terms of biological role, part of the twin-arginine translocation (Tat) system that transports large folded proteins containing a characteristic twin-arginine motif in their signal peptide across membranes. TatA could form the protein-conducting channel of the Tat system. The chain is Sec-independent protein translocase protein TatA from Rickettsia canadensis (strain McKiel).